A 351-amino-acid chain; its full sequence is MTSSANIATDSPANTDVLIIGAGPVGLFAAFEAGVIGLSSVIVDNVERAGGQCIELYPDKPIYDIPAIPSCTARELVDRLLEQCRPFAPPLHLGHRVDTVEQLDNGRWLARTDKGLTVESAAILIAAGNGSFVPQRLQLDDAAPLEGHYVHYSVSNLADFAGKKMVVAGGGDSALDWALALRTVAQHVTLVHRRNGFSATDSSVANMRRAVEAGEMNFAVGTIASLNAPGGQLESIELRQAEGSVQLATDHLLVLFGLVADLGPIQQWGVEVRGGRITVDTSNYESSRPGIFAAGDIAGYPNKQKLILSGFHEASLALRKAYSYAYPDKKRVHIHSSYDAKLAERVAASHT.

Aspartate 44, glutamine 52, tyrosine 57, valine 97, phenylalanine 132, aspartate 296, and serine 337 together coordinate FAD.

It belongs to the ferredoxin--NADP reductase type 2 family. Homodimer. FAD serves as cofactor.

The catalysed reaction is 2 reduced [2Fe-2S]-[ferredoxin] + NADP(+) + H(+) = 2 oxidized [2Fe-2S]-[ferredoxin] + NADPH. This chain is Ferredoxin--NADP reductase, found in Paraburkholderia phymatum (strain DSM 17167 / CIP 108236 / LMG 21445 / STM815) (Burkholderia phymatum).